We begin with the raw amino-acid sequence, 93 residues long: Putative pterin-4-alpha-carbinolamine dehydratase (93 aa).

The protein belongs to the pterin-4-alpha-carbinolamine dehydratase family.

It catalyses the reaction (4aS,6R)-4a-hydroxy-L-erythro-5,6,7,8-tetrahydrobiopterin = (6R)-L-erythro-6,7-dihydrobiopterin + H2O. In Roseiflexus castenholzii (strain DSM 13941 / HLO8), this protein is Putative pterin-4-alpha-carbinolamine dehydratase.